A 1005-amino-acid chain; its full sequence is Vacuolar membrane protease (1005 aa).

Over 1-14 (MAKETTARSILGYQ) the chain is Cytoplasmic. The helical transmembrane segment at 15-35 (TLPTTALIALIYVVAFFSVLV) threads the bilayer. The Vacuolar portion of the chain corresponds to 36 to 353 (SDQLPSIPHP…PEDSAKQKSK (318 aa)). N-linked (GlcNAc...) asparagine glycosylation is present at asparagine 107. 2 residues coordinate Zn(2+): histidine 152 and aspartate 164. Residue glutamate 196 is the Proton acceptor of the active site. Glutamate 197 is a binding site for Zn(2+). The N-linked (GlcNAc...) asparagine glycan is linked to asparagine 213. 2 residues coordinate Zn(2+): glutamate 222 and histidine 311. Residues 354-374 (PGVYFDRPVVLALLWAIGAVL) traverse the membrane as a helical segment. At 375–448 (KHNAGSPPPP…LITVWKQASF (74 aa)) the chain is on the cytoplasmic side. The interval 379 to 420 (GSPPPPPKPTVPHSANNASAGTGRPGASTRQPTRSFGSNEDA) is disordered. Positions 406-419 (STRQPTRSFGSNED) are enriched in polar residues. The chain crosses the membrane as a helical span at residues 449–469 (WIALIVTVGLQALLAWGYVAI). The Vacuolar portion of the chain corresponds to 470-479 (NPFTIYSRPY). Residues 480-500 (FVLLSFFALSFFSMTLVLQAA) traverse the membrane as a helical segment. Residues 501 to 519 (FPSSPVKHAIEVREQEKTT) lie on the Cytoplasmic side of the membrane. Residues 520–540 (ILLHLHLLSWIALLLSTILIG) traverse the membrane as a helical segment. Residues 541–543 (KSQ) are Vacuolar-facing. Residues 544–564 (VGSFYVVTVWYLGIWAATVIG) traverse the membrane as a helical segment. Residues 565-644 (TLQPILVSKR…RKTNSKSKED (80 aa)) are Cytoplasmic-facing. The tract at residues 577–640 (DKGKRRARRS…ASNRRKTNSK (64 aa)) is disordered. The segment covering 588-606 (SASTSSSSSSSSSSSSGSD) has biased composition (low complexity). The helical transmembrane segment at 645–665 (GAIGWWIAQVLLTVPPVVMLV) threads the bilayer. Residues 666 to 686 (GQITSIVLEAMNQTLTDGNSA) are Vacuolar-facing. Asparagine 677 carries N-linked (GlcNAc...) asparagine glycosylation. The chain crosses the membrane as a helical span at residues 687 to 707 (WSIYLLTALLATMLVLPVAPF). Over 708-713 (SPKLHR) the chain is Cytoplasmic. Residues 714-734 (GLIFLSAAVFVGFTIYLWVVF) traverse the membrane as a helical segment. Topologically, residues 735–1005 (PFTRQDPFKV…VEASAPFTVV (271 aa)) are vacuolar. Asparagine 761 and asparagine 961 each carry an N-linked (GlcNAc...) asparagine glycan.

It belongs to the peptidase M28 family. Zn(2+) is required as a cofactor.

The protein resides in the vacuole membrane. Functionally, may be involved in vacuolar sorting and osmoregulation. The polypeptide is Vacuolar membrane protease (Coprinopsis cinerea (strain Okayama-7 / 130 / ATCC MYA-4618 / FGSC 9003) (Inky cap fungus)).